Reading from the N-terminus, the 350-residue chain is SUMO-activating enzyme subunit 1 (350 aa).

Met-1 carries the post-translational modification N-acetylmethionine. Val-2 is modified (N-acetylvaline; in SUMO-activating enzyme subunit 1, N-terminally processed). The residue at position 16 (Ser-16) is a Phosphoserine. Lys-202 is subject to N6-acetyllysine.

It belongs to the ubiquitin-activating E1 family. In terms of assembly, heterodimer of SAE1 and UBA2/SAE2. The heterodimer corresponds to the two domains that are encoded on a single polypeptide chain in ubiquitin-activating enzyme E1. Interacts with UBE2I. In terms of tissue distribution, broadly expressed, with highest levels in testis.

It is found in the nucleus. The protein operates within protein modification; protein sumoylation. Its function is as follows. The heterodimer acts as an E1 ligase for SUMO1, SUMO2, SUMO3, and probably SUMO4. It mediates ATP-dependent activation of SUMO proteins followed by formation of a thioester bond between a SUMO protein and a conserved active site cysteine residue on UBA2/SAE2. The protein is SUMO-activating enzyme subunit 1 (Sae1) of Mus musculus (Mouse).